The chain runs to 341 residues: Adhesion protein Bd37 (341 aa).

The N-terminal stretch at 1 to 21 (MKTSKILNTAAICLLAMGFNG) is a signal peptide. N-linked (GlcNAc...) asparagine glycosylation is found at Asn-23 and Asn-30. Cys-26 and Cys-307 form a disulfide bridge. The disordered stretch occupies residues 36–75 (AAANPVVSTPGNDAQQAGTQQGGANSKSVPEQQPQQAAGE). Residues 49–59 (AQQAGTQQGGA) show a composition bias toward low complexity. Residues 60 to 75 (NSKSVPEQQPQQAAGE) show a composition bias toward polar residues. A lipid anchor (GPI-anchor amidated serine) is attached at Ser-311. Positions 312–341 (GQGSSPKKPSFAAVPSSLSAIVFGIIVSMF) are cleaved as a propeptide — removed in mature form.

Post-translationally, the signal sequence is cleaved. Glycosylated. In terms of processing, palmitoylated. Post-translationally, not myristoylated.

Its subcellular location is the cell membrane. The protein localises to the secreted. It localises to the vesicle. Functionally, binds to host erythrocytes. The sequence is that of Adhesion protein Bd37 from Babesia divergens.